Here is a 1218-residue protein sequence, read N- to C-terminus: Sodium bicarbonate cotransporter 3 (1218 aa).

Disordered regions lie at residues 1 to 31 (MEADGAGEQMRPLLTRGPDEEAVVDLGKTSS) and 53 to 99 (HVPF…SQRV). At 1-612 (MEADGAGEQM…DFKDALSLQC (612 aa)) the chain is on the extracellular side. Phosphoserine occurs at positions 57, 60, 89, and 155. A compositionally biased stretch (basic residues) spans 60–77 (SRRRHRHRGHKHHHRRRK). Over residues 78–90 (DKDSDKEDGRESP) the composition is skewed to basic and acidic residues. An N-linked (GlcNAc...) asparagine glycan is attached at asparagine 176. Residues serine 238, serine 247, and arginine 263 each carry the phosphoserine modification. Asparagine 274 carries N-linked (GlcNAc...) asparagine glycosylation. 3 disordered regions span residues 294–350 (SRAG…DIPR), 364–412 (KGQE…ENST), and 536–577 (SIRI…HAGP). Pro residues predominate over residues 308–318 (VPTPQNSPPSS). Positions 319–337 (PSLSRLTSRSSQQTQPQAP) are enriched in low complexity. The segment covering 383-396 (SPQSAPGNLDSSKS) has biased composition (polar residues). Phosphoserine occurs at positions 386, 404, and 407. Asparagine 410 is a glycosylation site (N-linked (GlcNAc...) asparagine). A phosphoserine mark is found at serine 411 and serine 560. Positions 567 to 576 (PPKEADHHAG) are enriched in basic and acidic residues. The chain crosses the membrane as a helical span at residues 613–633 (LASILFLYCACMSPVITFGGL). At 634 to 641 (LGEATEGR) the chain is on the cytoplasmic side. Residues 642 to 662 (ISAIESLFGASLTGIAYSLFA) traverse the membrane as a helical segment. At 663 to 699 (GQPLTILGSTGPVLVFEKILFKFCRDYHLSYLSLRTS) the chain is on the extracellular side. The helical transmembrane segment at 700–720 (IGLWTSFLCIVLVATDASSLV) threads the bilayer. Over 721-729 (CYITRFTEE) the chain is Cytoplasmic. Residues 730 to 750 (AFAALICIIFIYEALEKLFHL) traverse the membrane as a helical segment. Residues 751–821 (GEIYAFNMHN…MFVGSACGPH (71 aa)) lie on the Extracellular side of the membrane. Cysteines 770 and 772 form a disulfide. Asparagine 780, asparagine 790, and asparagine 800 each carry an N-linked (GlcNAc...) asparagine glycan. Residues cysteine 806 and cysteine 818 are joined by a disulfide bond. A helical transmembrane segment spans residues 822–842 (GPYVPDVLFWCVVLFFTTFFL). Residues 843–865 (SSFLKQFKTKRYFPTKVRSTISD) are Cytoplasmic-facing. The helical transmembrane segment at 866–886 (FAVFLTIVIMVAIDYLVGIPS) threads the bilayer. The Extracellular portion of the chain corresponds to 887 to 912 (PKLHVPEKFEPTDPSRGWIISPLGDN). A helical membrane pass occupies residues 913-933 (PWWTLLIAAVPALLCTILIFM). Topologically, residues 934 to 958 (DQQITAVIINRKEHKLKKGAGYHLD) are cytoplasmic. Residues 959–979 (LLMVAVMLGVCSIMGLPWFVA) traverse the membrane as a helical segment. Over 980-1015 (ATVLSISHVNSLKVESECSAPGEQPKFLGIREQRVT) the chain is Extracellular. An essential for cell membrane localization and transport activity region spans residues 1012–1135 (QRVTGLMIFI…MDLCFTKREL (124 aa)). A helical membrane pass occupies residues 1016–1036 (GLMIFILMGLSVFMTSVLKFI). Over 1037–1038 (PM) the chain is Cytoplasmic. Residues 1039–1059 (PVLYGVFLYMGVSSLKGIQFF) form a helical membrane-spanning segment. The Extracellular portion of the chain corresponds to 1060 to 1096 (DRIKLFGMPAKHQPDLIYLRYVPLWKVHVFTVVQLTC). Phosphoserine occurs at positions 1067 and 1078. Residues 1097–1117 (LVLLWVIKASAAAVVFPMMVL) form a helical membrane-spanning segment. The tract at residues 1118-1140 (ALVFVRKLMDLCFTKRELSWLDD) is essential for interaction with RACK1. Residues 1118-1218 (ALVFVRKLMD…KKYMDAETSL (101 aa)) lie on the Cytoplasmic side of the membrane. A CA2-binding region spans residues 1138–1140 (LDD). The span at 1148–1165 (KKEDDKKKKEKEEAERML) shows a compositional bias: basic and acidic residues. The segment at 1148 to 1172 (KKEDDKKKKEKEEAERMLQGDGDTV) is disordered. Threonine 1171 carries the phosphothreonine modification. Serine 1180, threonine 1188, isoleucine 1201, and serine 1217 each carry phosphoserine. The short motif at 1215–1218 (ETSL) is the PDZ-binding element.

It belongs to the anion exchanger (TC 2.A.31) family. In terms of assembly, interacts with USH1C. Forms a complex with ATP6V1B1 and NHERF1/EBP50. Interacts in a pH dependent-manner with CA2/carbonic anhydrase 2. Interacts with CFTR probably through NHERF1/EBP50. Interacts with RACK1. In terms of processing, undergoes lysosome-mediated degradation. N-glycosylated. In terms of tissue distribution, expressed in aorta, ventricles, atrium, mesenteric artery, kidney, spleen, duodenum, jejunum, ileum, colon, lung, trachea, gastric fundus and pylorus, cerebrum, cerebellum, pancreas, liver, parotid gland, and epididymis. Expressed in the inner ear by cochlear outer and inner hair cells (at protein level). Highly expressed in testis and spleen. Specifically expressed in kidney. As to expression, specifically expressed in hippocampal neurons.

It localises to the basolateral cell membrane. The protein resides in the apical cell membrane. The protein localises to the cell projection. Its subcellular location is the stereocilium. It is found in the cell membrane. The catalysed reaction is hydrogencarbonate(in) + Na(+)(in) = hydrogencarbonate(out) + Na(+)(out). Its activity is regulated as follows. Insensitive to stilbene derivatives. Electroneutral sodium- and bicarbonate-dependent cotransporter with a Na(+):HCO3(-) 1:1 stoichiometry. Mediates the sodium-dependent bicarbonate transport important for pH recovery after acid load as well as for regulation of steady-state pH in the duodenum and vascular smooth muscle cells. Plays a key role in macrophage acidification, mediating bicarbonate import into the cytoplasm which is crucial for net acid extrusion and maintenance of cytoplasmic pH during phagocytosis. Provides cellular bicarbonate for de novo purine and pyrimidine synthesis and is a key mediator of de novo nucleotide synthesis downstream of mTORC1 signaling in proliferating cells. This is Sodium bicarbonate cotransporter 3 (Slc4a7) from Rattus norvegicus (Rat).